The following is a 567-amino-acid chain: MPKWAHLGLAALLLISTTQEGTADIDWWENASLYQIYPRSFQDSDGDGIGDLKGITSRLGYLKEIGITATWLSPIFTSPMSDFGYDISNFYDIDPIFGTLEDFDDLIVEAKSLGVKIILDFVPNHSSDENVWFEKSVNREDGYDDFYVWDDGKLNEETGARDPPSNWVSVFSGPMWTWNEKRQQYFLHQFQVKQPDLNFTNPMVREHMLDVLKFWLDRGVDGFRIDAVPHIYEHRNADGSYPDEPVSGWGSDPNAYDYHDHIYTKDQPATVDLMYEWREFLDNYRAQNGGDSRVLLAEAYSSVETLSAYFGNSTHQGTQLPMNFQLMYLSGYSTAKDVVGSIDYWMNTMWKEHQTANWVVGNHDTNRVADRMGAHKVDLLNVIVNALPGASVTYYGEEIGMSNVDVECTGDSCEDRDGERTPMQWTAGKNADFSDGESTWLPLSPEYQRYNVQTERGVSRSSLNIFKGLQELKSSSAFLAFKEDGGFSYEAVTEQVLQIIRTNKISEEYRILVNMGNGMEILDGLAPKTYEYVLATAYSTHYSGQKADLSQRIILMPYEAVVLRWLA.

A signal peptide spans 1 to 23 (MPKWAHLGLAALLLISTTQEGTA). Residues asparagine 30, asparagine 124, and asparagine 198 are each glycosylated (N-linked (GlcNAc...) asparagine). Aspartate 226 (nucleophile) is an active-site residue. Glutamate 298 (proton donor) is an active-site residue. Asparagine 312 carries N-linked (GlcNAc...) asparagine glycosylation.

The protein belongs to the glycosyl hydrolase 13 family.

The enzyme catalyses Hydrolysis of terminal, non-reducing (1-&gt;4)-linked alpha-D-glucose residues with release of alpha-D-glucose.. The protein is Maltase A2 (Mal-A2) of Drosophila melanogaster (Fruit fly).